We begin with the raw amino-acid sequence, 2202 residues long: Activating signal cointegrator 1 complex subunit 3 (2202 aa).

Positions 1-400 (MALPRLTGAL…RQRDADVEKI (400 aa)) are required for interaction with ASCC2. Ser12 carries the phosphoserine modification. Coiled-coil stretches lie at residues 18–79 (KQDN…AAKQ) and 328–356 (IQSE…KAGE). The Helicase ATP-binding 1 domain occupies 486 to 669 (ETAYNTNENM…FLHVNPYIGL (184 aa)). 499-506 (APTGAGKT) contacts ATP. Lys572 carries the N6-acetyllysine modification. Positions 611–614 (DEVH) match the DEVH box motif. A Helicase C-terminal 1 domain is found at 728–914 (TVRTAMSLIE…GTVTNVEEAV (187 aa)). One can recognise an SEC63 1 domain in the interval 978-1287 (STDLGRTASH…GAEAVCIINF (310 aa)). The 176-residue stretch at 1336-1511 (HTLYHTDCNV…WLNIKQMGLF (176 aa)) folds into the Helicase ATP-binding 2 domain. 1349-1356 (APTGSGKT) lines the ATP pocket. The DEIH box motif lies at 1453–1456 (DEIH). The Helicase C-terminal 2 domain occupies 1544 to 1739 (PAFQAIRSHS…VLSDHLNAEI (196 aa)). The SEC63 2 domain occupies 1812 to 2176 (PLTYGRIASY…LGLDQQYDIY (365 aa)). A Phosphoserine modification is found at Ser2195.

The protein belongs to the helicase family. In terms of assembly, identified in the ASCC complex that contains ASCC1, ASCC2 and ASCC3. Functions as scaffolding subunit that interacts directly with both ASCC1 and ASCC2. Interacts directly with ALKBH3, and thereby recruits ALKBH3 to the ASCC complex. Part of the ASC-1/TRIP4 complex, that contains TRIP4, ASCC1, ASCC2 and ASCC3. Part of the RQT (ribosome quality control trigger) complex, that contains ASCC2, ASCC3 and TRIP4. Associates with ribosomes; recruited to collided ribosomes. Interacts with ZCCHC4. Interacts with ZNF598. Interacts with RPS3. Ubiquitous.

The protein localises to the nucleus. The protein resides in the nucleus speckle. It is found in the cytoplasm. It localises to the cytosol. It carries out the reaction Couples ATP hydrolysis with the unwinding of duplex DNA by translocating in the 3'-5' direction.. The catalysed reaction is ATP + H2O = ADP + phosphate + H(+). ATPase involved both in DNA repair and rescue of stalled ribosomes. 3'-5' DNA helicase involved in repair of alkylated DNA: promotes DNA unwinding to generate single-stranded substrate needed for ALKBH3, enabling ALKBH3 to process alkylated N3-methylcytosine (3mC) within double-stranded regions. Also involved in activation of the ribosome quality control (RQC) pathway, a pathway that degrades nascent peptide chains during problematic translation. Drives the splitting of stalled ribosomes that are ubiquitinated in a ZNF598-dependent manner, as part of the ribosome quality control trigger (RQT) complex. Part of the ASC-1 complex that enhances NF-kappa-B, SRF and AP1 transactivation. In Homo sapiens (Human), this protein is Activating signal cointegrator 1 complex subunit 3 (ASCC3).